The sequence spans 62 residues: Large ribosomal subunit protein bL32 (62 aa).

The interval 1–20 (MAVPARHTSKQKKRSRRGHI) is disordered. The span at 7-20 (HTSKQKKRSRRGHI) shows a compositional bias: basic residues.

The protein belongs to the bacterial ribosomal protein bL32 family.

This Lactobacillus acidophilus (strain ATCC 700396 / NCK56 / N2 / NCFM) protein is Large ribosomal subunit protein bL32.